The following is a 517-amino-acid chain: GMP synthase [glutamine-hydrolyzing] (517 aa).

The 191-residue stretch at 9 to 199 folds into the Glutamine amidotransferase type-1 domain; the sequence is RILILDFGSQ…VLNVCGCEGL (191 aa). Cys-86 (nucleophile) is an active-site residue. Catalysis depends on residues His-173 and Glu-175. The 193-residue stretch at 200–392 folds into the GMPS ATP-PPase domain; the sequence is WTSASIIEDA…LGLPYNMLYR (193 aa). Residue 227–233 coordinates ATP; the sequence is SGGVDSS.

In terms of assembly, homodimer.

It carries out the reaction XMP + L-glutamine + ATP + H2O = GMP + L-glutamate + AMP + diphosphate + 2 H(+). It participates in purine metabolism; GMP biosynthesis; GMP from XMP (L-Gln route): step 1/1. Catalyzes the synthesis of GMP from XMP. The protein is GMP synthase [glutamine-hydrolyzing] of Aliivibrio salmonicida (strain LFI1238) (Vibrio salmonicida (strain LFI1238)).